The sequence spans 106 residues: UPF0145 protein Pfl01_1745 (106 aa).

This sequence belongs to the UPF0145 family.

This is UPF0145 protein Pfl01_1745 from Pseudomonas fluorescens (strain Pf0-1).